The chain runs to 179 residues: Large ribosomal subunit protein uL5 (179 aa).

This sequence belongs to the universal ribosomal protein uL5 family. As to quaternary structure, part of the 50S ribosomal subunit; part of the 5S rRNA/L5/L18/L25 subcomplex. Contacts the 5S rRNA and the P site tRNA. Forms a bridge to the 30S subunit in the 70S ribosome.

Its function is as follows. This is one of the proteins that bind and probably mediate the attachment of the 5S RNA into the large ribosomal subunit, where it forms part of the central protuberance. In the 70S ribosome it contacts protein S13 of the 30S subunit (bridge B1b), connecting the 2 subunits; this bridge is implicated in subunit movement. Contacts the P site tRNA; the 5S rRNA and some of its associated proteins might help stabilize positioning of ribosome-bound tRNAs. The protein is Large ribosomal subunit protein uL5 of Synechococcus sp. (strain CC9605).